The sequence spans 222 residues: Disulfide bond formation protein D (222 aa).

The signal sequence occupies residues 1–36 (MKKKQQSSAKFAVILTVVVVVLLAAIVIINNKTEQG). The region spanning 37–220 (NDAVSGQPSI…IKETIEKELK (184 aa)) is the Thioredoxin domain. Cys-69 and Cys-72 form a disulfide bridge.

This sequence belongs to the thioredoxin family. DsbA subfamily.

The protein resides in the cell membrane. The protein localises to the membrane raft. Its function is as follows. Required for the stabilization, possibly via formation of a disulfide bond, of the obligatory competence protein ComGC. May be required for the stability of secreted proteins with disulfide bonds. Not required for sporulation. This Bacillus subtilis (strain 168) protein is Disulfide bond formation protein D (bdbD).